The following is a 107-amino-acid chain: Replication restart protein PriB (107 aa).

Positions 1-97 constitute an SSB domain; sequence MNTLELSARV…LHLQQARRIA (97 aa).

Belongs to the PriB family. In terms of assembly, homodimer. Interacts with PriA and DnaT. Component of the replication restart primosome. Primosome assembly occurs via a 'hand-off' mechanism. PriA binds to replication forks, subsequently PriB then DnaT bind; DnaT then displaces ssDNA to generate the helicase loading substrate.

In terms of biological role, involved in the restart of stalled replication forks, which reloads the replicative helicase on sites other than the origin of replication; the PriA-PriB pathway is the major replication restart pathway. During primosome assembly it facilitates complex formation between PriA and DnaT on DNA; stabilizes PriA on DNA. Stimulates the DNA unwinding activity of PriA helicase. This Bordetella parapertussis (strain 12822 / ATCC BAA-587 / NCTC 13253) protein is Replication restart protein PriB.